The sequence spans 338 residues: MNVFYDKDADLSLIKGKQVTIIGYGSQGHAHALNLKDSGVNVTVGLRKGGASWSKAENAGLSVKEVAEAVKSADVVMMLLPDEQIADVYAKEVHANIKQGAALAFAHGFNVHYGAVIPRADLDVIMIAPKAPGHTVRGTYSQGGGVPHLIAVAQNKSGAARDIALSYAAANGGGRAGIIETNFREETETDLFGEQAVLCGGTVELIKAGFETLVEAGYAPEMAYFECLHELKLIVDLIYEGGIANMNYSISNNAEYGEYVTGPRIVTEETKKAMKQCLTDIQTGEYAKSFILENKAGAPTLQSRRRLTAEHQIEQVGAKLRAMMPWIAKNKLVDQSKN.

The KARI N-terminal Rossmann domain occupies 1 to 181 (MNVFYDKDAD…GGGRAGIIET (181 aa)). NADP(+)-binding positions include 24–27 (YGSQ), arginine 47, and serine 52. The active site involves histidine 107. NADP(+) is bound at residue glycine 133. The 146-residue stretch at 182-327 (NFREETETDL…AKLRAMMPWI (146 aa)) folds into the KARI C-terminal knotted domain. Mg(2+) is bound by residues aspartate 190, glutamate 194, glutamate 226, and glutamate 230. Serine 251 is a binding site for substrate.

The protein belongs to the ketol-acid reductoisomerase family. Requires Mg(2+) as cofactor.

The enzyme catalyses (2R)-2,3-dihydroxy-3-methylbutanoate + NADP(+) = (2S)-2-acetolactate + NADPH + H(+). It catalyses the reaction (2R,3R)-2,3-dihydroxy-3-methylpentanoate + NADP(+) = (S)-2-ethyl-2-hydroxy-3-oxobutanoate + NADPH + H(+). It functions in the pathway amino-acid biosynthesis; L-isoleucine biosynthesis; L-isoleucine from 2-oxobutanoate: step 2/4. The protein operates within amino-acid biosynthesis; L-valine biosynthesis; L-valine from pyruvate: step 2/4. Functionally, involved in the biosynthesis of branched-chain amino acids (BCAA). Catalyzes an alkyl-migration followed by a ketol-acid reduction of (S)-2-acetolactate (S2AL) to yield (R)-2,3-dihydroxy-isovalerate. In the isomerase reaction, S2AL is rearranged via a Mg-dependent methyl migration to produce 3-hydroxy-3-methyl-2-ketobutyrate (HMKB). In the reductase reaction, this 2-ketoacid undergoes a metal-dependent reduction by NADPH to yield (R)-2,3-dihydroxy-isovalerate. The protein is Ketol-acid reductoisomerase (NADP(+)) of Burkholderia lata (strain ATCC 17760 / DSM 23089 / LMG 22485 / NCIMB 9086 / R18194 / 383).